The following is a 348-amino-acid chain: MENSEQLVWLHGEPQATGSLKSTAEDFLVVEDLGFQPDGDGEQVLVRVRKRGCNTQFVAEMLAKFARLPLRAVSYAGLKDRHAVTEQWFCLHMPGKETPDFSSLELEGCDVLEVIRHRRKLRIGTLRGNHFALVLRQVSDRNEVDARLAQIAASGVPNYFGSQRFGRNGNNLEQARLWANNDIRVKERSKRSFYLSASRSAMFNQVASARLAGQQAKTVLCGDALQLTGRGSWFVAKADELETLQVRLDAGELQITAPLPGDDELGTQDDALAFEEQALTGQETLWSLVKRERVEPARRAVLLYPQQMQWEWQDDVTVAVKFWLPAGSFATSVVREVLHSQQDIDIGA.

Residue Phe27 participates in substrate binding. Asp80 (nucleophile) is an active-site residue. Asn129 is a substrate binding site. The 149-residue stretch at 155 to 303 folds into the TRUD domain; that stretch reads GVPNYFGSQR…VEPARRAVLL (149 aa). Residue Phe329 participates in substrate binding.

This sequence belongs to the pseudouridine synthase TruD family.

The catalysed reaction is uridine(13) in tRNA = pseudouridine(13) in tRNA. Its function is as follows. Responsible for synthesis of pseudouridine from uracil-13 in transfer RNAs. The polypeptide is tRNA pseudouridine synthase D (Pectobacterium atrosepticum (strain SCRI 1043 / ATCC BAA-672) (Erwinia carotovora subsp. atroseptica)).